The chain runs to 391 residues: Alpha-2B adrenergic receptor (391 aa).

A helical membrane pass occupies residues 1 to 25; it reads AIAAVITFLILFTIFGNALVILAVL. The Cytoplasmic portion of the chain corresponds to 26 to 36; it reads TSRSLRAPQNL. The chain crosses the membrane as a helical span at residues 37-62; sequence FLVSLAAADILVATLIIPFSLANELL. Residues 63-72 lie on the Extracellular side of the membrane; that stretch reads GYWYFRRTWC. Cysteine 72 and cysteine 151 form a disulfide bridge. A helical transmembrane segment spans residues 73 to 95; that stretch reads EVYLALDVLFCTSSIVHLCAISL. Residues 96–117 are Cytoplasmic-facing; it reads DRYWAVSRALEYNSKRTPRRIK. Residues 118–140 traverse the membrane as a helical segment; the sequence is CIILTVWLIAAVISLPPLIYKGD. Residues 141 to 156 lie on the Extracellular side of the membrane; sequence QGPQPRGRPQCKLNQE. A helical transmembrane segment spans residues 157 to 180; that stretch reads AWYILASSIGSFFAPCLIMILVYL. Residues 181–355 are Cytoplasmic-facing; it reads RIYLIAKRSH…LTREKRFTFV (175 aa). Disordered stretches follow at residues 194–218 and 233–312; these read PRAK…APSS and EANR…PLQQ. Over residues 233–247 the composition is skewed to basic and acidic residues; it reads EANRHSKSTGEKVEG. The segment covering 256-266 has biased composition (pro residues); it reads PGVPPSWPPLP. Basic and acidic residues predominate over residues 271 to 281; that stretch reads GQEEDIYRASP. Over residues 282-294 the composition is skewed to acidic residues; that stretch reads EEEAGDDEEEECE. The segment covering 295–309 has biased composition (low complexity); it reads PQAVPVSPASACSPP. Residues 356–379 traverse the membrane as a helical segment; sequence LAVVIGVFVLCWFPFFFSYSLGAI. Residues 380–388 are Extracellular-facing; that stretch reads CPQHCKVPH. The chain crosses the membrane as a helical span at residues 389-391; sequence GLF.

The protein belongs to the G-protein coupled receptor 1 family. Adrenergic receptor subfamily. ADRA2B sub-subfamily. As to quaternary structure, interacts with RAB26. Interacts with PPP1R9B. Interacts with GGA1, GGA2 and GGA3.

The protein resides in the cell membrane. Its function is as follows. Alpha-2 adrenergic receptors mediate the catecholamine-induced inhibition of adenylate cyclase through the action of G proteins. This Erinaceus europaeus (Western European hedgehog) protein is Alpha-2B adrenergic receptor (ADRA2B).